Consider the following 132-residue polypeptide: Large ribosomal subunit protein bL17 (132 aa).

The protein belongs to the bacterial ribosomal protein bL17 family. As to quaternary structure, part of the 50S ribosomal subunit. Contacts protein L32.

This Ehrlichia canis (strain Jake) protein is Large ribosomal subunit protein bL17.